We begin with the raw amino-acid sequence, 393 residues long: 4-hydroxyphenylpyruvate dioxygenase (393 aa).

2 consecutive VOC domains span residues Ala-17 to Arg-148 and Phe-179 to Lys-339. The Fe cation site is built by His-182, His-267, and Glu-350.

It belongs to the 4HPPD family. It depends on Fe cation as a cofactor. As to expression, expressed in the hypodermis and intestine.

It carries out the reaction 3-(4-hydroxyphenyl)pyruvate + O2 = homogentisate + CO2. It functions in the pathway amino-acid degradation; L-phenylalanine degradation; acetoacetate and fumarate from L-phenylalanine: step 3/6. In terms of biological role, key enzyme in the degradation of tyrosine. The polypeptide is 4-hydroxyphenylpyruvate dioxygenase (Caenorhabditis elegans).